The primary structure comprises 727 residues: MVENKSSYELPDQKTLDMNKEWVQELEDIFYSYKKYDVNKVRVQQFLDRRSDFLVYDFYTSNLSMDAMQYFQAGVTQKDVGLSKDYILLMRKLYSMLTEPSKQFFQEQFVKEWQYHEIDYTPYFETLVPRFREKIARLLDEIVKNPEEVDDDVQEELRWHLLFSPVTTLLDIFTRCLKNFEITGFCLNVCLKVPQLFFDRPLKIYHTEYETDRVESLMALVFRRLIFNKRWVDTSDEEWSNLEQLARVICSGQEPSLMSAWPLLEVVLCELYTQNRTPMISVEVLSEIAVKIVENFDNLKYATSARTKPAENVLLTPSIICFLLNIIVDENVSNTVIENCKMILKAIGQNMEQPFDAEAKSYLTSKVLKEFPWTLEFAISTWFKALEVEKRRIPSAVYKAINAEMKETFDERTFDIEESETVDQSINEEDEERCSTLSSESSVKTAISIDHKSDTAVDNLEMNQLHLSPKPKASVEAVKSCKPAFVAVIFEEIPPETDQNISVFEDPTIEVLTEYLDCIITMGVFDISCADELMRHSSVTFESSEQLEKVMKTAFEENFEIANAGPQRIKEISGKILEVFGSTSSESDHDRIASSIIELIPTEEYEKTGPRWSHDIKKSEIIQPLVIPVEATLESWPPAEYRYVAPGIKESRDSARHERLLRQQLATTKSLEMAQLHRDLWAENEKNMEHWTRPASPCNSSFFAESSVKPTTSSAYGNSSNFSRYAD.

The segment at Phe-703–Asp-727 is disordered.

As to quaternary structure, may interact with deps-1 and prg-1.

The protein localises to the cytoplasmic granule. Its function is as follows. Plays a role in regulating deps-1 cluster formation in the germline. In Caenorhabditis elegans, this protein is Protein edg-1.